Consider the following 701-residue polypeptide: Polyphosphate kinase (701 aa).

ATP is bound at residue N45. Residues R373 and R403 each contribute to the Mg(2+) site. Residues P428–T462 enclose the PLD phosphodiesterase 1 domain. The active-site Phosphohistidine intermediate is H433. 3 residues coordinate ATP: Y466, R562, and H590. Residues D585–N615 form the PLD phosphodiesterase 2 domain.

Belongs to the polyphosphate kinase 1 (PPK1) family. Requires Mg(2+) as cofactor. Post-translationally, an intermediate of this reaction is the autophosphorylated ppk in which a phosphate is covalently linked to a histidine residue through a N-P bond.

It catalyses the reaction [phosphate](n) + ATP = [phosphate](n+1) + ADP. Its function is as follows. Catalyzes the reversible transfer of the terminal phosphate of ATP to form a long-chain polyphosphate (polyP). The protein is Polyphosphate kinase of Vibrio cholerae serotype O1 (strain ATCC 39315 / El Tor Inaba N16961).